The sequence spans 332 residues: Heptahelical transmembrane protein 1 (332 aa).

Residues 1–52 form a disordered region; that stretch reads MDQNGHNDEAETVSCGNGNCKSKIVPGDDHGGDESSGTKRRKKRKTQQKTMK. Residues 1–98 are Cytoplasmic-facing; it reads MDQNGHNDEA…VFSFHNESLN (98 aa). Positions 26–37 are enriched in basic and acidic residues; sequence PGDDHGGDESSG. Residues 38-52 are compositionally biased toward basic residues; it reads TKRRKKRKTQQKTMK. A helical membrane pass occupies residues 99–119; sequence VWTHLIGFIFFVALTVANIIH. Residues 120–138 lie on the Extracellular side of the membrane; the sequence is HDGFFPVDAKSPGNVTRWP. The chain crosses the membrane as a helical span at residues 139–159; the sequence is FFVFLGGSMFCLLASSICHLF. Topologically, residues 160-172 are cytoplasmic; sequence CCHSKELNVFLLR. The chain crosses the membrane as a helical span at residues 173–193; it reads IDYAGITAMIITSFFPPIFYI. Residues 194–199 lie on the Extracellular side of the membrane; that stretch reads FQCTPR. Residues 200–220 traverse the membrane as a helical segment; sequence WYFIYLAGITSMGIFTIITLF. The Cytoplasmic segment spans residues 221-233; sequence TPSLSAPKYRAFR. Residues 234–254 form a helical membrane-spanning segment; sequence ALLFASMGLFGIVPAAHALVV. At 255-262 the chain is on the extracellular side; it reads NWGNPQRN. The chain crosses the membrane as a helical span at residues 263–283; it reads VTLVYELLMAVFYLVGTGFYV. At 284 to 303 the chain is on the cytoplasmic side; sequence GRVPERLKPGWFDRVGHSHQ. Residues 304-324 form a helical membrane-spanning segment; it reads IFHVFVLLGALSHYAAALLFL. At 325 to 332 the chain is on the extracellular side; that stretch reads DWRDHVGC.

Belongs to the ADIPOR family. As to quaternary structure, interacts (via N-terminus) with SCRM/ICE1. Expressed in roots, hypocotyls, vasculature of cotyledons and leaves, hydathodes and guard cells. In reproductive organs, expressed in trichomes, veins of sepals, stamens and stigmata of pistils.

It is found in the membrane. Functionally, may act as a negative regulator of abscisic acid (ABA)-mediated osmotic stress signaling and function in cross-talk between cold and osmotic signaling. This chain is Heptahelical transmembrane protein 1 (HHP1), found in Arabidopsis thaliana (Mouse-ear cress).